The sequence spans 75 residues: Sec-independent protein translocase protein TatA (75 aa).

A helical transmembrane segment spans residues 1–21 (MGSFSIWHWLIVLVIVALVFG). Residues 44-75 (KDANSDKPAEQVTQQKVADDTIDVQAKEKTNS) are disordered.

It belongs to the TatA/E family. The Tat system comprises two distinct complexes: a TatABC complex, containing multiple copies of TatA, TatB and TatC subunits, and a separate TatA complex, containing only TatA subunits. Substrates initially bind to the TatABC complex, which probably triggers association of the separate TatA complex to form the active translocon.

It is found in the cell inner membrane. Part of the twin-arginine translocation (Tat) system that transports large folded proteins containing a characteristic twin-arginine motif in their signal peptide across membranes. TatA could form the protein-conducting channel of the Tat system. The sequence is that of Sec-independent protein translocase protein TatA from Bordetella petrii (strain ATCC BAA-461 / DSM 12804 / CCUG 43448).